The sequence spans 487 residues: uncharacterized protein (487 aa).

Positions 1–31 are cleaved as a signal peptide; it reads MRFHRQGISAIIGVLLIVLLGFCWKLSGSYG. 8 N-linked (GlcNAc...) asparagine glycosylation sites follow: N40, N68, N150, N220, N304, N367, N442, and N448. The segment at 141–176 is disordered; sequence LERRHGRFGNGTNGDHPKGPPPPPPPPDEKGRGSQK.

Post-translationally, N-glycosylated.

This is an uncharacterized protein from Saccharomyces cerevisiae (strain ATCC 204508 / S288c) (Baker's yeast).